Consider the following 160-residue polypeptide: MTARHPKLPHVYLKPGEFHFATKPTVVTTVLGSCVSVTMFDVFSRTAAICHALLPDGPRDDVFRYVDSSIIRMLEMFMSRGITPRQLQVKLFGGSDMLGATASRPGVGSRNVDIARQVLAAEGLEVAAADVGGTRGRKLFFYTHTGEVLLKRLNRTEADS.

It belongs to the CheD family.

It catalyses the reaction L-glutaminyl-[protein] + H2O = L-glutamyl-[protein] + NH4(+). In terms of biological role, probably deamidates glutamine residues to glutamate on methyl-accepting chemotaxis receptors (MCPs), playing an important role in chemotaxis. This is Probable chemoreceptor glutamine deamidase CheD 2 from Geobacter sulfurreducens (strain ATCC 51573 / DSM 12127 / PCA).